Consider the following 272-residue polypeptide: Sulfate transporter CysZ (272 aa).

Helical transmembrane passes span 29-49 (FVIIPILLNTILLCGLFWLFI), 66-86 (WLSFLSVILLTLSILTILLLF), 148-168 (IIALFLLSFIPLVGQTIVPVL), and 219-239 (FVPVINLLIMPVAVCGATLMW).

The protein belongs to the CysZ family.

It is found in the cell inner membrane. Functionally, high affinity, high specificity proton-dependent sulfate transporter, which mediates sulfate uptake. Provides the sulfur source for the cysteine synthesis pathway. This chain is Sulfate transporter CysZ, found in Haemophilus influenzae (strain 86-028NP).